The chain runs to 332 residues: Melanocortin receptor 4 (332 aa).

Residues 1–43 (MNSTLQHGMHTSLHFWNRSTYGQHSNATESLGKGYPDGGCYEQ) are Extracellular-facing. Asn-2, Asn-17, and Asn-26 each carry an N-linked (GlcNAc...) asparagine glycan. Cystine bridges form between Cys-40–Cys-279 and Cys-271–Cys-277. A helical membrane pass occupies residues 44–69 (LFVSPEVFVTLGVISLLENILVIVAI). Over 70 to 81 (AKNKNLHSPMYF) the chain is Cytoplasmic. The helical transmembrane segment at 82 to 106 (FICSLAVADMLVSVSNGSETIVITL) threads the bilayer. Ca(2+) is bound by residues Glu-100, Asp-122, and Asp-126. Residues 107–123 (LNSTDTDAQSFTVNIDN) lie on the Extracellular side of the membrane. Residues 124–145 (VIDSVICSSLLASICSLLSIAV) form a helical membrane-spanning segment. Topologically, residues 146 to 165 (DRYFTIFYALQYHNIMTVRR) are cytoplasmic. Residues 166–186 (VGIIISCIWAACTVSGILFII) form a helical membrane-spanning segment. Residues 187-191 (YSDST) are Extracellular-facing. The helical transmembrane segment at 192-215 (AVIICLITMFFTMLALMASLYVHM) threads the bilayer. Residues 216–248 (FLMARLHIKRIAVLPGTGTIRQGANMKGAITLT) lie on the Cytoplasmic side of the membrane. A helical membrane pass occupies residues 249–271 (ILIGVFVVCWAPFFLHLIFYISC). Over 272 to 280 (PQNPYCVCF) the chain is Extracellular. A helical transmembrane segment spans residues 281 to 304 (MSHFNLYLILIMCNSIIDPLIYAL). Residues 305-332 (RSQELRKTFKEIICCYPLGGLCDLSSRY) lie on the Cytoplasmic side of the membrane. Cys-318 carries S-palmitoyl cysteine lipidation.

It belongs to the G-protein coupled receptor 1 family. In terms of assembly, homodimer; disulfide-linked, also forms higher order oligomers. Interacts with GNAS. Interacts with ATRNL1. Interacts with MGRN1; this interaction competes with GNAS-binding and thus inhibits agonist-induced cAMP production. Interacts with MRAP and MRAP2; these associated factors increase ligand-sensitivity and generation of cAMP.

The protein resides in the cell membrane. In terms of biological role, hormone receptor that acts as a key component of the leptin-melanocortin pathway at the intersection of homeostatic maintenance of energetic state. Plays a role in regulating food intake: activation by a stimulating hormone such as anorexigenic alpha-melanocyte stimulating hormone (alpha-MSH) inhibits appetite, whereas binding to a natural antagonist like Agouti-related protein/AGRP promotes appetite. G-protein-coupled receptor that activates conventional Galphas signaling leading to induction of anorexogenic signaling in the hypothalamus to result in negative energy balance. Regulates the firing activity of neurons from the hypothalamus by alpha-MSH and AGRP independently of Galphas signaling by ligand-induced coupling of closure of inwardly rectifying potassium channel KCNJ13. In intestinal epithelial cells, plays a role in the inhibition of hepatic glucose production via nesfatin-1/NUCB2 leading to increased cyclic adenosine monophosphate (cAMP) levels and glucagon-like peptide 1 (GLP-1) secretion in the intestinal epithelium. This is Melanocortin receptor 4 (MC4R) from Vulpes vulpes (Red fox).